The primary structure comprises 73 residues: ATGNVWAKDGYLVIIKTGCKYNCYILGKNKYCNSECKEVGAGYGYCYAFGCWCEGLPESIPTWPLPDKTCGTK.

The signal sequence occupies residues 1-7 (ATGNVWA). Positions 8-71 (KDGYLVIIKT…TWPLPDKTCG (64 aa)) constitute an LCN-type CS-alpha/beta domain. Disulfide bonds link Cys-19-Cys-70, Cys-23-Cys-46, Cys-32-Cys-51, and Cys-36-Cys-53. Residue Cys-70 is modified to Cysteine amide. A propeptide spanning residues 71 to 73 (GTK) is cleaved from the precursor.

Belongs to the long (4 C-C) scorpion toxin superfamily. Sodium channel inhibitor family. Beta subfamily. In terms of tissue distribution, expressed by the venom gland.

The protein localises to the secreted. In terms of biological role, beta toxins bind voltage-independently at site-4 of sodium channels (Nav) and shift the voltage of activation toward more negative potentials thereby affecting sodium channel activation and promoting spontaneous and repetitive firing. This Centruroides exilicauda (Bark scorpion) protein is Neurotoxin Cex13.